The primary structure comprises 152 residues: Ribosome maturation factor RimP (152 aa).

Belongs to the RimP family.

It is found in the cytoplasm. Functionally, required for maturation of 30S ribosomal subunits. The sequence is that of Ribosome maturation factor RimP from Citrobacter koseri (strain ATCC BAA-895 / CDC 4225-83 / SGSC4696).